Here is a 176-residue protein sequence, read N- to C-terminus: Calponin-1 (176 aa).

Positions 22–125 constitute a Calponin-homology (CH) domain; sequence PQTERQLRVW…STLIALASQA (104 aa). The stretch at 158 to 176 is one Calponin-like repeat; it reads IGLQMGTNKFASQQGMTAY. Thr164 carries the phosphothreonine; by ROCK2 modification. Phosphoserine; by ROCK2 is present on Ser169. At Thr174 the chain carries Phosphothreonine; by ROCK2.

Belongs to the calponin family. Smooth muscle, and tissues containing significant amounts of smooth muscle.

Thin filament-associated protein that is implicated in the regulation and modulation of smooth muscle contraction. It is capable of binding to actin, calmodulin and tropomyosin. The interaction of calponin with actin inhibits the actomyosin Mg-ATPase activity. This is Calponin-1 (CNN1) from Meleagris gallopavo (Wild turkey).